The sequence spans 392 residues: NADH-quinone oxidoreductase subunit D (392 aa).

This sequence belongs to the complex I 49 kDa subunit family. As to quaternary structure, NDH-1 is composed of 14 different subunits. Subunits NuoB, C, D, E, F, and G constitute the peripheral sector of the complex.

It is found in the cell inner membrane. It catalyses the reaction a quinone + NADH + 5 H(+)(in) = a quinol + NAD(+) + 4 H(+)(out). NDH-1 shuttles electrons from NADH, via FMN and iron-sulfur (Fe-S) centers, to quinones in the respiratory chain. The immediate electron acceptor for the enzyme in this species is believed to be ubiquinone. Couples the redox reaction to proton translocation (for every two electrons transferred, four hydrogen ions are translocated across the cytoplasmic membrane), and thus conserves the redox energy in a proton gradient. The chain is NADH-quinone oxidoreductase subunit D from Parvibaculum lavamentivorans (strain DS-1 / DSM 13023 / NCIMB 13966).